A 124-amino-acid polypeptide reads, in one-letter code: Fluoride-specific ion channel FluC (124 aa).

The next 4 helical transmembrane spans lie at 4–24 (VLFV…ISLL), 35–55 (FGTL…FALG), 62–82 (PEFK…FSTF), and 95–115 (LVKA…VVYL). Gly-74 and Thr-77 together coordinate Na(+).

The protein belongs to the fluoride channel Fluc/FEX (TC 1.A.43) family.

It is found in the cell inner membrane. It catalyses the reaction fluoride(in) = fluoride(out). Its activity is regulated as follows. Na(+) is not transported, but it plays an essential structural role and its presence is essential for fluoride channel function. Functionally, fluoride-specific ion channel. Important for reducing fluoride concentration in the cell, thus reducing its toxicity. The chain is Fluoride-specific ion channel FluC from Shewanella pealeana (strain ATCC 700345 / ANG-SQ1).